Reading from the N-terminus, the 418-residue chain is Serine hydroxymethyltransferase (418 aa).

(6S)-5,6,7,8-tetrahydrofolate is bound by residues Leu-121 and 125–127 (GHL). Residue Lys-230 is modified to N6-(pyridoxal phosphate)lysine. 356-358 (SPF) is a (6S)-5,6,7,8-tetrahydrofolate binding site.

The protein belongs to the SHMT family. In terms of assembly, homodimer. It depends on pyridoxal 5'-phosphate as a cofactor.

The protein localises to the cytoplasm. It catalyses the reaction (6R)-5,10-methylene-5,6,7,8-tetrahydrofolate + glycine + H2O = (6S)-5,6,7,8-tetrahydrofolate + L-serine. Its pathway is one-carbon metabolism; tetrahydrofolate interconversion. It participates in amino-acid biosynthesis; glycine biosynthesis; glycine from L-serine: step 1/1. Catalyzes the reversible interconversion of serine and glycine with tetrahydrofolate (THF) serving as the one-carbon carrier. This reaction serves as the major source of one-carbon groups required for the biosynthesis of purines, thymidylate, methionine, and other important biomolecules. Also exhibits THF-independent aldolase activity toward beta-hydroxyamino acids, producing glycine and aldehydes, via a retro-aldol mechanism. The chain is Serine hydroxymethyltransferase from Shewanella halifaxensis (strain HAW-EB4).